The chain runs to 124 residues: Protein Rev (124 aa).

Ser5 is subject to Phosphoserine; by host CK2. The tract at residues 19 to 27 (IIKILYQSN) is homomultimerization. The tract at residues 25 to 51 (QSNPYPSPEGTRKARRNRRRRWRARQK) is disordered. Residues 35-51 (TRKARRNRRRRWRARQK) carry the Nuclear localization signal and RNA-binding (RRE) motif. Positions 37 to 50 (KARRNRRRRWRARQ) are enriched in basic residues. Positions 74 to 85 (LELPELDKLSLQ) match the Nuclear export signal and binding to XPO1 motif. The span at 90–106 (TQDVGTSNTSQPQTATG) shows a compositional bias: polar residues. Residues 90–124 (TQDVGTSNTSQPQTATGETVPAGGNYSILGKGAKN) are disordered.

It belongs to the HIV-1 REV protein family. As to quaternary structure, homomultimer; when bound to the RRE. Multimeric assembly is essential for activity and may involve XPO1. Binds to human KPNB1, XPO1, TNPO1, RANBP5 and IPO7. Interacts with the viral Integrase. Interacts with human KHDRBS1. Interacts with human NAP1; this interaction decreases Rev multimerization and stimulates its activity. Interacts with human DEAD-box helicases DDX3 and DDX24; these interactions may serve for viral RNA export to the cytoplasm and packaging, respectively. Interacts with human PSIP1; this interaction may inhibit HIV-1 DNA integration by promoting dissociation of the Integrase-LEDGF/p75 complex. In terms of processing, asymmetrically arginine dimethylated at one site by host PRMT6. Methylation impairs the RNA-binding activity and export of viral RNA from the nucleus to the cytoplasm. Phosphorylated by protein kinase CK2. Presence of, and maybe binding to the N-terminus of the regulatory beta subunit of CK2 is necessary for CK2-mediated Rev's phosphorylation.

It localises to the host nucleus. It is found in the host nucleolus. The protein localises to the host cytoplasm. Escorts unspliced or incompletely spliced viral pre-mRNAs (late transcripts) out of the nucleus of infected cells. These pre-mRNAs carry a recognition sequence called Rev responsive element (RRE) located in the env gene, that is not present in fully spliced viral mRNAs (early transcripts). This function is essential since most viral proteins are translated from unspliced or partially spliced pre-mRNAs which cannot exit the nucleus by the pathway used by fully processed cellular mRNAs. Rev itself is translated from a fully spliced mRNA that readily exits the nucleus. Rev's nuclear localization signal (NLS) binds directly to KPNB1/Importin beta-1 without previous binding to KPNA1/Importin alpha-1. KPNB1 binds to the GDP bound form of RAN (Ran-GDP) and targets Rev to the nucleus. In the nucleus, the conversion from Ran-GDP to Ran-GTP dissociates Rev from KPNB1 and allows Rev's binding to the RRE in viral pre-mRNAs. Rev multimerization on the RRE via cooperative assembly exposes its nuclear export signal (NES) to the surface. Rev can then form a complex with XPO1/CRM1 and Ran-GTP, leading to nuclear export of the complex. Conversion from Ran-GTP to Ran-GDP mediates dissociation of the Rev/RRE/XPO1/RAN complex, so that Rev can return to the nucleus for a subsequent round of export. Beside KPNB1, also seems to interact with TNPO1/Transportin-1, RANBP5/IPO5 and IPO7/RANBP7 for nuclear import. The nucleoporin-like HRB/RIP is an essential cofactor that probably indirectly interacts with Rev to release HIV RNAs from the perinuclear region to the cytoplasm. The chain is Protein Rev from Pan (chimpanzees).